A 333-amino-acid chain; its full sequence is Anthranilate phosphoribosyltransferase (333 aa).

5-phospho-alpha-D-ribose 1-diphosphate contacts are provided by residues Gly81, 84–85, Thr89, 91–94, 109–117, and Ala121; these read GD, NIST, and KHGNRSVSS. Gly81 lines the anthranilate pocket. Ser93 is a Mg(2+) binding site. Asn112 contributes to the anthranilate binding site. Residue Arg167 coordinates anthranilate. 2 residues coordinate Mg(2+): Asp225 and Glu226.

This sequence belongs to the anthranilate phosphoribosyltransferase family. In terms of assembly, homodimer. Mg(2+) serves as cofactor.

The enzyme catalyses N-(5-phospho-beta-D-ribosyl)anthranilate + diphosphate = 5-phospho-alpha-D-ribose 1-diphosphate + anthranilate. It functions in the pathway amino-acid biosynthesis; L-tryptophan biosynthesis; L-tryptophan from chorismate: step 2/5. Catalyzes the transfer of the phosphoribosyl group of 5-phosphorylribose-1-pyrophosphate (PRPP) to anthranilate to yield N-(5'-phosphoribosyl)-anthranilate (PRA). This chain is Anthranilate phosphoribosyltransferase, found in Pasteurella multocida (strain Pm70).